Consider the following 383-residue polypeptide: Putative protein FAM157A (383 aa).

Disordered stretches follow at residues 1 to 21 and 177 to 254; these read MGPL…PLPK and ATAR…PLGR.

Belongs to the FAM157 family.

In Homo sapiens (Human), this protein is Putative protein FAM157A (FAM157A).